The following is an 81-amino-acid chain: Photosystem I iron-sulfur center (81 aa).

2 consecutive 4Fe-4S ferredoxin-type domains span residues 2-31 and 39-68; these read SHSV…MIPW and IASA…VRVY. [4Fe-4S] cluster-binding residues include C11, C14, C17, C21, C48, C51, C54, and C58.

As to quaternary structure, the eukaryotic PSI reaction center is composed of at least 11 subunits. The cofactor is [4Fe-4S] cluster.

The protein resides in the plastid. Its subcellular location is the chloroplast thylakoid membrane. It carries out the reaction reduced [plastocyanin] + hnu + oxidized [2Fe-2S]-[ferredoxin] = oxidized [plastocyanin] + reduced [2Fe-2S]-[ferredoxin]. Apoprotein for the two 4Fe-4S centers FA and FB of photosystem I (PSI); essential for photochemical activity. FB is the terminal electron acceptor of PSI, donating electrons to ferredoxin. The C-terminus interacts with PsaA/B/D and helps assemble the protein into the PSI complex. Required for binding of PsaD and PsaE to PSI. PSI is a plastocyanin-ferredoxin oxidoreductase, converting photonic excitation into a charge separation, which transfers an electron from the donor P700 chlorophyll pair to the spectroscopically characterized acceptors A0, A1, FX, FA and FB in turn. This Phalaenopsis aphrodite subsp. formosana (Moth orchid) protein is Photosystem I iron-sulfur center.